The chain runs to 428 residues: Protein terminus (428 aa).

A C3H1-type zinc finger spans residues 325 to 346 (CRRCRTQFSRRSKLHIHQKLRC).

The sequence is that of Protein terminus (term) from Drosophila melanogaster (Fruit fly).